Reading from the N-terminus, the 491-residue chain is UDP-N-acetylmuramate--L-alanine ligase (491 aa).

Residue 126–132 (GTHGKTT) participates in ATP binding.

The protein belongs to the MurCDEF family.

Its subcellular location is the cytoplasm. It carries out the reaction UDP-N-acetyl-alpha-D-muramate + L-alanine + ATP = UDP-N-acetyl-alpha-D-muramoyl-L-alanine + ADP + phosphate + H(+). It participates in cell wall biogenesis; peptidoglycan biosynthesis. Functionally, cell wall formation. The sequence is that of UDP-N-acetylmuramate--L-alanine ligase from Escherichia coli O7:K1 (strain IAI39 / ExPEC).